A 437-amino-acid chain; its full sequence is Chaperone SurA (437 aa).

The N-terminal stretch at 1 to 27 (MHNHVFKTIARHGLIALFFFFSISAMA) is a signal peptide. 2 PpiC domains span residues 179–280 (QDEF…KLLN) and 290–388 (VDQT…QVLE).

It is found in the periplasm. The catalysed reaction is [protein]-peptidylproline (omega=180) = [protein]-peptidylproline (omega=0). Chaperone involved in the correct folding and assembly of outer membrane proteins. Recognizes specific patterns of aromatic residues and the orientation of their side chains, which are found more frequently in integral outer membrane proteins. May act in both early periplasmic and late outer membrane-associated steps of protein maturation. The polypeptide is Chaperone SurA (Methylobacillus flagellatus (strain ATCC 51484 / DSM 6875 / VKM B-1610 / KT)).